We begin with the raw amino-acid sequence, 172 residues long: RNA pyrophosphohydrolase (172 aa).

A Nudix hydrolase domain is found at glycine 6–lysine 149. Positions glycine 38–glycine 59 match the Nudix box motif.

Belongs to the Nudix hydrolase family. RppH subfamily. The cofactor is a divalent metal cation.

In terms of biological role, accelerates the degradation of transcripts by removing pyrophosphate from the 5'-end of triphosphorylated RNA, leading to a more labile monophosphorylated state that can stimulate subsequent ribonuclease cleavage. The protein is RNA pyrophosphohydrolase of Vibrio cholerae serotype O1 (strain ATCC 39315 / El Tor Inaba N16961).